A 595-amino-acid chain; its full sequence is Potassium-transporting ATPase potassium-binding subunit (595 aa).

10 consecutive transmembrane segments (helical) span residues 9–29 (ICGY…YMAA), 63–83 (TGYA…VYAL), 135–155 (GLTV…VALI), 177–197 (ILHI…GQGV), 285–305 (FLEM…FGVM), 312–332 (GWVI…VTVL), 412–432 (GLYG…LMIG), 451–471 (AIVI…AVML), 516–536 (LMLG…VLAI), and 560–580 (FVGL…IPAL).

Belongs to the KdpA family. The system is composed of three essential subunits: KdpA, KdpB and KdpC.

It is found in the cell inner membrane. Functionally, part of the high-affinity ATP-driven potassium transport (or Kdp) system, which catalyzes the hydrolysis of ATP coupled with the electrogenic transport of potassium into the cytoplasm. This subunit binds the periplasmic potassium ions and delivers the ions to the membrane domain of KdpB through an intramembrane tunnel. The protein is Potassium-transporting ATPase potassium-binding subunit of Methylococcus capsulatus (strain ATCC 33009 / NCIMB 11132 / Bath).